A 211-amino-acid chain; its full sequence is Ribosome maturation factor RimM (211 aa).

The PRC barrel domain occupies 111 to 182 (PDAWYDHQLV…TLVVTPPLGL (72 aa)). A disordered region spans residues 184-211 (EEIPDETPTAEPTPAEAAEPAPEGDDAR). Positions 189–204 (ETPTAEPTPAEAAEPA) are enriched in low complexity.

It belongs to the RimM family. Binds ribosomal protein uS19.

It is found in the cytoplasm. An accessory protein needed during the final step in the assembly of 30S ribosomal subunit, possibly for assembly of the head region. Essential for efficient processing of 16S rRNA. May be needed both before and after RbfA during the maturation of 16S rRNA. It has affinity for free ribosomal 30S subunits but not for 70S ribosomes. This is Ribosome maturation factor RimM from Clavibacter michiganensis subsp. michiganensis (strain NCPPB 382).